A 234-amino-acid chain; its full sequence is Probable transcriptional regulatory protein TcrX (234 aa).

In terms of domain architecture, Response regulatory spans 10 to 124 (TVLVVDDEPV…EVVLRLRALL (115 aa)). The residue at position 59 (Asp-59) is a 4-aspartylphosphate. The segment at residues 135 to 232 (GAQLVVGDLV…LRGAGYVLKP (98 aa)) is a DNA-binding region (ompR/PhoB-type).

In terms of processing, phosphorylated by TcrY.

The protein localises to the cytoplasm. In terms of biological role, member of the two-component regulatory system TcrY/TcrX. The chain is Probable transcriptional regulatory protein TcrX (tcrX) from Mycobacterium tuberculosis (strain ATCC 25618 / H37Rv).